We begin with the raw amino-acid sequence, 178 residues long: MDKKTQALVEQYAKSLVEIAIEKDSLAELQSETEALLSVFEETNLADFLSSLVVSRDEKVKLVRLLQESSSVYMNNFLEVILQNEREAFLKAILEGVQKDFVIATNQHDIVVTTAVALTDEQKERILALVAEKFGVKAGKLVENIDESILGGFVINVNNKVIDTSIRRQLQEFKMNLK.

This sequence belongs to the ATPase delta chain family. F-type ATPases have 2 components, F(1) - the catalytic core - and F(0) - the membrane proton channel. F(1) has five subunits: alpha(3), beta(3), gamma(1), delta(1), epsilon(1). F(0) has three main subunits: a(1), b(2) and c(10-14). The alpha and beta chains form an alternating ring which encloses part of the gamma chain. F(1) is attached to F(0) by a central stalk formed by the gamma and epsilon chains, while a peripheral stalk is formed by the delta and b chains.

It localises to the cell membrane. Its function is as follows. F(1)F(0) ATP synthase produces ATP from ADP in the presence of a proton or sodium gradient. F-type ATPases consist of two structural domains, F(1) containing the extramembraneous catalytic core and F(0) containing the membrane proton channel, linked together by a central stalk and a peripheral stalk. During catalysis, ATP synthesis in the catalytic domain of F(1) is coupled via a rotary mechanism of the central stalk subunits to proton translocation. Functionally, this protein is part of the stalk that links CF(0) to CF(1). It either transmits conformational changes from CF(0) to CF(1) or is implicated in proton conduction. The protein is ATP synthase subunit delta of Streptococcus equinus (Streptococcus bovis).